The following is a 443-amino-acid chain: Threonine/serine transporter TdcC (443 aa).

Transmembrane regions (helical) follow at residues 22 to 42, 44 to 64, 97 to 117, 140 to 160, 163 to 183, 207 to 227, 261 to 281, 319 to 339, 366 to 386, 389 to 409, and 423 to 443; these read TTWT…FFPI, AGFG…PIAF, GVVI…IYGV, FVAL…KDLM, VMSY…LSLI, ILVT…FSPI, MLMV…LSPA, ASII…LGTL, ISMI…PNIL, IEAM…MYAI, and DNVF…YKLF.

This sequence belongs to the amino acid/polyamine transporter 2 family. SdaC/TdcC subfamily.

Its subcellular location is the cell inner membrane. It carries out the reaction L-threonine(in) + H(+)(in) = L-threonine(out) + H(+)(out). It catalyses the reaction L-serine(in) + H(+)(in) = L-serine(out) + H(+)(out). Functionally, involved in the import of threonine and serine into the cell, with the concomitant import of a proton (symport system). This Citrobacter koseri (strain ATCC BAA-895 / CDC 4225-83 / SGSC4696) protein is Threonine/serine transporter TdcC.